A 434-amino-acid chain; its full sequence is Serine hydroxymethyltransferase (434 aa).

Residues L132 and 136-138 (GHL) each bind (6S)-5,6,7,8-tetrahydrofolate. Position 241 is an N6-(pyridoxal phosphate)lysine (K241).

Belongs to the SHMT family. As to quaternary structure, homodimer. Pyridoxal 5'-phosphate is required as a cofactor.

The protein localises to the cytoplasm. The enzyme catalyses (6R)-5,10-methylene-5,6,7,8-tetrahydrofolate + glycine + H2O = (6S)-5,6,7,8-tetrahydrofolate + L-serine. Its pathway is one-carbon metabolism; tetrahydrofolate interconversion. It functions in the pathway amino-acid biosynthesis; glycine biosynthesis; glycine from L-serine: step 1/1. Functionally, catalyzes the reversible interconversion of serine and glycine with tetrahydrofolate (THF) serving as the one-carbon carrier. This reaction serves as the major source of one-carbon groups required for the biosynthesis of purines, thymidylate, methionine, and other important biomolecules. Also exhibits THF-independent aldolase activity toward beta-hydroxyamino acids, producing glycine and aldehydes, via a retro-aldol mechanism. This is Serine hydroxymethyltransferase from Kineococcus radiotolerans (strain ATCC BAA-149 / DSM 14245 / SRS30216).